The chain runs to 1142 residues: Serine/threonine-protein kinase GIN4 (1142 aa).

Residues 19–289 (WKLGETLGLG…TRDILKHPLL (271 aa)) form the Protein kinase domain. Residues 25–33 (LGLGSTGKV) and K48 contribute to the ATP site. D156 functions as the Proton acceptor in the catalytic mechanism. 2 disordered regions span residues 378–412 (KKRQ…SVTS) and 425–469 (ASSA…RNKR). The span at 382–395 (SISSVSVSPSKKVS) shows a compositional bias: low complexity. At S406 the chain carries Phosphoserine. Residues 425-440 (ASSASSSNLTTPGSSK) show a composition bias toward low complexity. The segment covering 441–452 (RLSKNFSSKKKL) has biased composition (basic residues). A compositionally biased stretch (polar residues) spans 454–465 (TIVNQSSPTPAS). A phosphoserine mark is found at S465, S471, S617, S689, S719, S805, S807, and S883. The tract at residues 676–698 (DPGIMFSSPTEEVSPVEPKRTEN) is disordered. T884 bears the Phosphothreonine mark. Residues 903–1031 (NEAKQTDNLH…NTAIGNGSFF (129 aa)) are disordered. 3 stretches are compositionally biased toward basic and acidic residues: residues 923-937 (NELR…DQAH), 962-984 (KEEK…KVVD), and 996-1021 (KIRE…KQDK). S930 carries the post-translational modification Phosphoserine.

The protein belongs to the protein kinase superfamily. CAMK Ser/Thr protein kinase family. NIM1 subfamily. As to quaternary structure, component of the GIN4 complex composed of at least BNI5, CDC3, CDC10, CDC11, CDC12, GIN4, NAP1 and SHS1 which forms a ring at the bud neck.

The protein resides in the cytoplasm. Its subcellular location is the bud neck. It carries out the reaction L-seryl-[protein] + ATP = O-phospho-L-seryl-[protein] + ADP + H(+). It catalyses the reaction L-threonyl-[protein] + ATP = O-phospho-L-threonyl-[protein] + ADP + H(+). Functionally, serine/threonine-protein kinase which regulates the localization and the function of the septins during mitosis. Phosphorylates SHS1. The polypeptide is Serine/threonine-protein kinase GIN4 (GIN4) (Saccharomyces cerevisiae (strain ATCC 204508 / S288c) (Baker's yeast)).